The primary structure comprises 355 residues: C-C chemokine receptor type 1 (355 aa).

At 1–34 the chain is on the extracellular side; the sequence is MEISDFTEAYPTTTEFDYGDSTPCQKTAVRAFGA. The chain crosses the membrane as a helical span at residues 35–60; that stretch reads GLLPPLYSLVFIIGVVGNVLVILVLM. The Cytoplasmic portion of the chain corresponds to 61 to 64; the sequence is QHRR. The chain crosses the membrane as a helical span at residues 65–91; the sequence is LQSMTSIYLFNLAVSDLVFLFTLPFWI. Over 92–107 the chain is Extracellular; the sequence is DYKLKDDWIFGDAMCK. Cys106 and Cys183 are disulfide-bonded. Residues 108–129 traverse the membrane as a helical segment; it reads LLSGFYYLGLYSEIFFIILLTI. Over 130–146 the chain is Cytoplasmic; the sequence is DRYLAIVHAVFALRART. A helical membrane pass occupies residues 147-171; that stretch reads VTFGIITSIITWALAILASMPALYF. At 172–197 the chain is on the extracellular side; sequence FKAQWEFTHRTCSPHFPYKSLKQWKR. Residues 198–223 traverse the membrane as a helical segment; the sequence is FQALKLNLLGLILPLLVMIICYAGII. The Cytoplasmic portion of the chain corresponds to 224–239; that stretch reads RILLRRPSEKKVKAVR. A helical transmembrane segment spans residues 240–264; that stretch reads LIFAITLLFFLLWTPYNLSVFVSAF. The Extracellular segment spans residues 265–281; sequence QDVLFTNQCEQSKQLDL. The helical transmembrane segment at 282-305 threads the bilayer; sequence AMQVTEVIAYTHCCVNPIIYVFVG. Residues 306 to 355 are Cytoplasmic-facing; it reads ERFWKYLRQLFQRHVAIPLAKWLPFLSVDQLERTSSISPSTGEHELSAGF.

The protein belongs to the G-protein coupled receptor 1 family. In terms of assembly, interacts with CREB3. Interacts with CCL3. Interacts with CCL15. Interacts with CCL23. Interacts with GNAI1. Interacts with PF4/CXCL4. As to expression, detected in the heart, spleen, lung, peritoneal exudate cells and leukocytes.

It is found in the cell membrane. Chemokine receptor that plays a crucial role in regulating immune cell migration, inflammation, and immune responses. Contributes to the inflammatory response by recruiting immune cells, such as monocytes, macrophages, T-cells, and dendritic cells, to sites of inflammation for the clearance of pathogens and the resolution of tissue damage. When activated by its ligands including CCL3, CCL5-9, CCL13-16 and CCL23, triggers a signaling cascade within immune cells, leading to their migration towards the source of the chemokine. For example, mediates neutrophil migration after activation by CCL3 leading to the sequential release of TNF-alpha and leukotriene B4. Also mediates monocyte migration upon CXCL4 binding. Activation by CCL5 results in neuroinflammation through the ERK1/2 signaling pathway. The polypeptide is C-C chemokine receptor type 1 (Ccr1) (Mus musculus (Mouse)).